A 325-amino-acid chain; its full sequence is Tetraacyldisaccharide 4'-kinase (325 aa).

55–62 lines the ATP pocket; it reads TAGGNGKT.

It belongs to the LpxK family.

The enzyme catalyses a lipid A disaccharide + ATP = a lipid IVA + ADP + H(+). Its pathway is glycolipid biosynthesis; lipid IV(A) biosynthesis; lipid IV(A) from (3R)-3-hydroxytetradecanoyl-[acyl-carrier-protein] and UDP-N-acetyl-alpha-D-glucosamine: step 6/6. Functionally, transfers the gamma-phosphate of ATP to the 4'-position of a tetraacyldisaccharide 1-phosphate intermediate (termed DS-1-P) to form tetraacyldisaccharide 1,4'-bis-phosphate (lipid IVA). This is Tetraacyldisaccharide 4'-kinase from Salmonella choleraesuis (strain SC-B67).